A 124-amino-acid polypeptide reads, in one-letter code: Small ribosomal subunit protein uS11 (124 aa).

This sequence belongs to the universal ribosomal protein uS11 family. As to quaternary structure, part of the 30S ribosomal subunit. Interacts with proteins S7 and S18. Binds to IF-3.

Functionally, located on the platform of the 30S subunit, it bridges several disparate RNA helices of the 16S rRNA. Forms part of the Shine-Dalgarno cleft in the 70S ribosome. This Sulfurovum sp. (strain NBC37-1) protein is Small ribosomal subunit protein uS11.